A 120-amino-acid polypeptide reads, in one-letter code: C-C motif chemokine 23 (120 aa).

Positions 1–21 are cleaved as a signal peptide; it reads MKVSVAALSCLMLVTALGSQA. Cystine bridges form between C54–C78, C55–C94, and C65–C105.

The protein belongs to the intercrine beta (chemokine CC) family.

It localises to the secreted. In terms of biological role, shows chemotactic activity for monocytes, resting T-lymphocytes, and neutrophils, but not for activated lymphocytes. Inhibits proliferation of myeloid progenitor cells in colony formation assays. This protein can bind heparin. Binds CCR1. The chain is C-C motif chemokine 23 (CCL23) from Macaca mulatta (Rhesus macaque).